Reading from the N-terminus, the 632-residue chain is 1-deoxy-D-xylulose-5-phosphate synthase (632 aa).

Residues H79 and 120 to 122 (GHA) contribute to the thiamine diphosphate site. D152 is a binding site for Mg(2+). Thiamine diphosphate-binding positions include 153 to 154 (GS), N181, F293, and E377. Position 181 (N181) interacts with Mg(2+).

Belongs to the transketolase family. DXPS subfamily. As to quaternary structure, homodimer. Mg(2+) serves as cofactor. The cofactor is thiamine diphosphate.

The enzyme catalyses D-glyceraldehyde 3-phosphate + pyruvate + H(+) = 1-deoxy-D-xylulose 5-phosphate + CO2. Its pathway is metabolic intermediate biosynthesis; 1-deoxy-D-xylulose 5-phosphate biosynthesis; 1-deoxy-D-xylulose 5-phosphate from D-glyceraldehyde 3-phosphate and pyruvate: step 1/1. Functionally, catalyzes the acyloin condensation reaction between C atoms 2 and 3 of pyruvate and glyceraldehyde 3-phosphate to yield 1-deoxy-D-xylulose-5-phosphate (DXP). This chain is 1-deoxy-D-xylulose-5-phosphate synthase, found in Phocaeicola vulgatus (strain ATCC 8482 / DSM 1447 / JCM 5826 / CCUG 4940 / NBRC 14291 / NCTC 11154) (Bacteroides vulgatus).